The chain runs to 193 residues: MSRKCLVITVSGLAGSGTTTLCRNLSRYYGFKHIYAGLIFRQMAKEMGMSLQQFQEYAEMHPEIDREVDRRQIEAAEDCNVVIEGRLAGWMVKEADLKVWLEAPIQVRAQRVARREGISIEEAFMQIAEREMQNRKRYLNLYGIDINDRSIYDLVINTFKWGPDGVFAIVKAAIDHLYPDGDAGSGANPGNKS.

Residue 12–20 participates in ATP binding; the sequence is GLAGSGTTT.

It belongs to the cytidylate kinase family. Type 2 subfamily.

The protein resides in the cytoplasm. The catalysed reaction is CMP + ATP = CDP + ADP. It carries out the reaction dCMP + ATP = dCDP + ADP. In Thermococcus sibiricus (strain DSM 12597 / MM 739), this protein is Cytidylate kinase.